Here is a 484-residue protein sequence, read N- to C-terminus: Ribosomal RNA small subunit methyltransferase F (484 aa).

Residues A126–K132, E150, D177, and D195 contribute to the S-adenosyl-L-methionine site. C248 functions as the Nucleophile in the catalytic mechanism.

Belongs to the class I-like SAM-binding methyltransferase superfamily. RsmB/NOP family.

It is found in the cytoplasm. It carries out the reaction cytidine(1407) in 16S rRNA + S-adenosyl-L-methionine = 5-methylcytidine(1407) in 16S rRNA + S-adenosyl-L-homocysteine + H(+). In terms of biological role, specifically methylates the cytosine at position 1407 (m5C1407) of 16S rRNA. The polypeptide is Ribosomal RNA small subunit methyltransferase F (Pectobacterium carotovorum subsp. carotovorum (strain PC1)).